We begin with the raw amino-acid sequence, 134 residues long: Spermadhesin-1 (134 aa).

A signal peptide spans 1-20 (MKLSSVIPWALLLSTATVDS). Disulfide bonds link Cys-30/Cys-51 and Cys-74/Cys-95. The CUB domain occupies 30 to 131 (CGGILKEESG…SFYEVLYFQD (102 aa)).

This sequence belongs to the spermadhesin family. As to expression, seminal vesicle tissue, ampulla and weakly in tissue of epididymis.

The protein localises to the secreted. Its function is as follows. Stimulates cell division and progesterone secretion of bovine granulosa cells in vitro in a potent and dose dependent manner. This protein appears to be a potent growth factor with effects on ovarian granulosa cells. This chain is Spermadhesin-1 (SPADH1), found in Bos taurus (Bovine).